The sequence spans 299 residues: 4-diphosphocytidyl-2-C-methyl-D-erythritol kinase (299 aa).

Residue Lys11 is part of the active site. 94–104 (PQGGGLGGGSS) is a binding site for ATP. Residue Asp136 is part of the active site.

The protein belongs to the GHMP kinase family. IspE subfamily.

It catalyses the reaction 4-CDP-2-C-methyl-D-erythritol + ATP = 4-CDP-2-C-methyl-D-erythritol 2-phosphate + ADP + H(+). It functions in the pathway isoprenoid biosynthesis; isopentenyl diphosphate biosynthesis via DXP pathway; isopentenyl diphosphate from 1-deoxy-D-xylulose 5-phosphate: step 3/6. In terms of biological role, catalyzes the phosphorylation of the position 2 hydroxy group of 4-diphosphocytidyl-2C-methyl-D-erythritol. The sequence is that of 4-diphosphocytidyl-2-C-methyl-D-erythritol kinase from Bordetella pertussis (strain Tohama I / ATCC BAA-589 / NCTC 13251).